Reading from the N-terminus, the 249-residue chain is tRNA pseudouridine synthase A (249 aa).

D53 acts as the Nucleophile in catalysis. Y111 is a binding site for substrate.

This sequence belongs to the tRNA pseudouridine synthase TruA family. In terms of assembly, homodimer.

The enzyme catalyses uridine(38/39/40) in tRNA = pseudouridine(38/39/40) in tRNA. Formation of pseudouridine at positions 38, 39 and 40 in the anticodon stem and loop of transfer RNAs. The sequence is that of tRNA pseudouridine synthase A from Streptococcus sanguinis (strain SK36).